We begin with the raw amino-acid sequence, 94 residues long: ESAT-6-like protein EsxO (94 aa).

The protein belongs to the WXG100 family. ESAT-6 subfamily. As to quaternary structure, forms a complex with EsxP.

It is found in the secreted. This is ESAT-6-like protein EsxO from Mycobacterium tuberculosis (strain CDC 1551 / Oshkosh).